Here is a 126-residue protein sequence, read N- to C-terminus: Aspartate 1-decarboxylase (126 aa).

Ser-25 serves as the catalytic Schiff-base intermediate with substrate; via pyruvic acid. Ser-25 bears the Pyruvic acid (Ser) mark. Thr-57 provides a ligand contact to substrate. Tyr-58 (proton donor) is an active-site residue. 72-74 (GAT) lines the substrate pocket.

It belongs to the PanD family. In terms of assembly, heterooctamer of four alpha and four beta subunits. Pyruvate is required as a cofactor. In terms of processing, is synthesized initially as an inactive proenzyme, which is activated by self-cleavage at a specific serine bond to produce a beta-subunit with a hydroxyl group at its C-terminus and an alpha-subunit with a pyruvoyl group at its N-terminus.

The protein resides in the cytoplasm. The enzyme catalyses L-aspartate + H(+) = beta-alanine + CO2. The protein operates within cofactor biosynthesis; (R)-pantothenate biosynthesis; beta-alanine from L-aspartate: step 1/1. Functionally, catalyzes the pyruvoyl-dependent decarboxylation of aspartate to produce beta-alanine. The chain is Aspartate 1-decarboxylase from Campylobacter jejuni subsp. doylei (strain ATCC BAA-1458 / RM4099 / 269.97).